We begin with the raw amino-acid sequence, 388 residues long: 5-hydroxytryptamine receptor 4 (388 aa).

Topologically, residues 1–19 (MDKLDANVSSKEGFGSVEK) are extracellular. Asn-7 carries N-linked (GlcNAc...) asparagine glycosylation. A helical transmembrane segment spans residues 20–44 (VVLLTFLSAVILMAILGNLLVMVAV). The Cytoplasmic segment spans residues 45-54 (CRDRQLRKIK). The chain crosses the membrane as a helical span at residues 55-78 (TNYFIVSLAFADLLVSVLVMPFGA). Residues 79 to 92 (IELVQDIWVYGEMF) are Extracellular-facing. The helical transmembrane segment at 93–117 (CLVRTSLDVLLTTASIFHLCCISLD) threads the bilayer. The cysteines at positions 93 and 184 are disulfide-linked. Residue Asp-100 coordinates serotonin. Residues 118-133 (RYYAICCQPLVYRNKM) lie on the Cytoplasmic side of the membrane. A helical transmembrane segment spans residues 134–157 (TPLRIALMLGGCWVIPMFISFLPI). The Extracellular portion of the chain corresponds to 158–188 (MQGWNNIGIVDLIEKRKFNQNSNSTYCVFMV). The chain crosses the membrane as a helical span at residues 189–212 (NKPYAITCSVVAFYIPFLLMVLAY). Residues 213–257 (YRIYVTAKEHARQIQVLQRAGAPAEGRPQPADQHSTHRMRTETKA) are Cytoplasmic-facing. Residues 258–283 (AKTLCIIMGCFCLCWAPFFVTNIVDP) traverse the membrane as a helical segment. Residue Asn-279 participates in serotonin binding. The Extracellular segment spans residues 284 to 290 (FIDYTVP). Residues 291 to 314 (GQLWTAFLWLGYINSGLNPFLYAF) form a helical membrane-spanning segment. At 315-388 (LNKSFRRAFL…PLVAAQPIDT (74 aa)) the chain is on the cytoplasmic side.

The protein belongs to the G-protein coupled receptor 1 family. As to quaternary structure, interacts (via C-terminus 330-346 AA) with GRK5; this interaction is promoted by 5-HT (serotonin).

It is found in the cell membrane. The protein localises to the endosome membrane. Functionally, G-protein coupled receptor for 5-hydroxytryptamine (serotonin), a biogenic hormone that functions as a neurotransmitter, a hormone and a mitogen. Ligand binding causes a conformation change that triggers signaling via guanine nucleotide-binding proteins (G proteins) and modulates the activity of downstream effectors. HTR4 is coupled to G(s) G alpha proteins and mediates activation of adenylate cyclase activity. This chain is 5-hydroxytryptamine receptor 4 (HTR4), found in Cavia porcellus (Guinea pig).